The primary structure comprises 148 residues: Large ribosomal subunit protein bL9 (148 aa).

Belongs to the bacterial ribosomal protein bL9 family.

In terms of biological role, binds to the 23S rRNA. This Salinispora arenicola (strain CNS-205) protein is Large ribosomal subunit protein bL9.